The chain runs to 1360 residues: DNA-directed RNA polymerase subunit beta (1360 aa).

It belongs to the RNA polymerase beta chain family. The RNAP catalytic core consists of 2 alpha, 1 beta, 1 beta' and 1 omega subunit. When a sigma factor is associated with the core the holoenzyme is formed, which can initiate transcription.

The enzyme catalyses RNA(n) + a ribonucleoside 5'-triphosphate = RNA(n+1) + diphosphate. DNA-dependent RNA polymerase catalyzes the transcription of DNA into RNA using the four ribonucleoside triphosphates as substrates. This Vesicomyosocius okutanii subsp. Calyptogena okutanii (strain HA) protein is DNA-directed RNA polymerase subunit beta.